The chain runs to 410 residues: Retrovirus-related Pol polyprotein from type-1 retrotransposable element R1 2 (410 aa).

One can recognise a Reverse transcriptase domain in the interval Gly-1–Val-118. The nucleic acid-binding endonuclease stretch occupies residues Ser-254 to Gly-410.

The enzyme catalyses DNA(n) + a 2'-deoxyribonucleoside 5'-triphosphate = DNA(n+1) + diphosphate. The chain is Retrovirus-related Pol polyprotein from type-1 retrotransposable element R1 2 from Nasonia vitripennis (Parasitic wasp).